Here is a 435-residue protein sequence, read N- to C-terminus: Zinc finger CCCH domain-containing protein 16 (435 aa).

The C3H1-type zinc-finger motif lies at 1 to 27 (MRKELCRNFQRGSCRYGENCRFLHPQQ). Residues 2–88 (RKELCRNFQR…ASTPTGGGAA (87 aa)) form a 6 X 2 AA repeats of F-G region. Disordered regions lie at residues 25–105 (PQQA…DHKC) and 205–374 (TPSI…SQNN). 2 repeat units span residues 34 to 35 (FG) and 36 to 37 (FG). Over residues 39–51 (QNQQQQQQQQQQN) the composition is skewed to low complexity. 2 repeat units span residues 56-57 (FG) and 58-59 (FG). Positions 63-77 (GGSSRPNQFQNTWSR) are enriched in polar residues. Residues 78 to 99 (TASTPTGGGAAASTQQTGKQTQ) are compositionally biased toward low complexity. Composition is skewed to polar residues over residues 205–320 (TPSI…VNTP) and 328–339 (SGFQTNPSTTFK). 2 tandem repeats follow at residues 343 to 344 (FG) and 359 to 360 (FG). The span at 351–374 (TTPQNNNIFGQSTPTPATNTSQNN) shows a compositional bias: polar residues.

Part of the nuclear pore complex (NPC). The NPC has an eight-fold symmetrical structure comprising a central transport channel and two rings, the cytoplasmic and nuclear rings, to which eight filaments are attached. The cytoplasmic filaments have loose ends, while the nuclear filaments are joined in a distal ring, forming a nuclear basket. NPCs are highly dynamic in configuration and composition, and can be devided in 3 subcomplexes, the NUP62 subcomplex, the NUP107-160 subcomplex and the NUP93 subcomplex, containing approximately 30 different nucleoporin proteins.

Its subcellular location is the nucleus envelope. The protein resides in the nucleus. It is found in the nuclear pore complex. This is Zinc finger CCCH domain-containing protein 16 from Arabidopsis thaliana (Mouse-ear cress).